The following is a 288-amino-acid chain: Diaminopimelate epimerase (288 aa).

2 residues coordinate substrate: Asn-14 and Asn-67. The active-site Proton donor is the Cys-76. Substrate contacts are provided by residues 77 to 78 (GN), Asn-166, Asn-199, and 217 to 218 (ER). Cys-226 acts as the Proton acceptor in catalysis. 227–228 (GT) serves as a coordination point for substrate.

The protein belongs to the diaminopimelate epimerase family. In terms of assembly, homodimer.

The protein localises to the cytoplasm. It catalyses the reaction (2S,6S)-2,6-diaminopimelate = meso-2,6-diaminopimelate. Its pathway is amino-acid biosynthesis; L-lysine biosynthesis via DAP pathway; DL-2,6-diaminopimelate from LL-2,6-diaminopimelate: step 1/1. Catalyzes the stereoinversion of LL-2,6-diaminopimelate (L,L-DAP) to meso-diaminopimelate (meso-DAP), a precursor of L-lysine and an essential component of the bacterial peptidoglycan. The protein is Diaminopimelate epimerase of Bacillus cereus (strain ATCC 14579 / DSM 31 / CCUG 7414 / JCM 2152 / NBRC 15305 / NCIMB 9373 / NCTC 2599 / NRRL B-3711).